A 548-amino-acid polypeptide reads, in one-letter code: (S)-beta-macrocarpene synthase (548 aa).

Asp-302 and Asp-306 together coordinate Mg(2+). Positions 302, 306, 443, and 446 each coordinate substrate. Positions 302–306 (DDTLD) match the DDXXD motif motif. Asn-446, Ser-450, and Glu-454 together coordinate Mg(2+).

This sequence belongs to the terpene synthase family. As to quaternary structure, monomer. It depends on Mg(2+) as a cofactor. The cofactor is Mn(2+). Expressed in roots. Not detected in leaves, unless damaged by herbivory or infected by fungi.

It localises to the cytoplasm. It carries out the reaction (S)-beta-bisabolene = (S)-beta-macrocarpene. The enzyme catalyses (2E,6E)-farnesyl diphosphate = (S)-beta-bisabolene + diphosphate. The catalysed reaction is (2E)-geranyl diphosphate = (4S)-limonene + diphosphate. It catalyses the reaction (2E)-geranyl diphosphate = beta-myrcene + diphosphate. It carries out the reaction (2E)-geranyl diphosphate = terpinolene + diphosphate. The enzyme catalyses (2E)-geranyl diphosphate + H2O = (S)-linalool + diphosphate. Its pathway is secondary metabolite biosynthesis; terpenoid biosynthesis. Functionally, involved in the biosynthesis of the bicyclic sesquiterpene (S)-beta-macrocarpene. Can use both geranyl diphosphate and farnesyl diphosphate as substrate, but not geranylgeranyl diphosphate. Produces mainly (S)-beta-macrocarpene, but also smaller amounts of beta-bisabolene and (E)-beta-farnesene when used with farnesyl diphosphate as substrate. In the presence of geranyl diphosphate, produces the acyclic monoterpenes beta-myrcene and linalool along with minor amounts of the cyclic compounds limonene, alpha-thujene, sabinene and alpha-terpinolene. May be involved in plant defense. The sequence is that of (S)-beta-macrocarpene synthase from Zea mays (Maize).